The chain runs to 108 residues: MDTIAFRMVLNRGMRDEYERRHREIWPELVSKLHNAGVRDYRIFLDDDTHHLFAVLTRTADHSMERLPELAVMRKWWDYMADIMQTAPDRTPLQQALIPLFELQHPSN.

Position 18 (Tyr18) interacts with substrate. His22 functions as the Proton donor in the catalytic mechanism. Residues Tyr41 and 76–77 each bind substrate; that span reads WW.

This sequence belongs to the rhamnose mutarotase family. In terms of assembly, homodimer.

It localises to the cytoplasm. It catalyses the reaction alpha-L-rhamnose = beta-L-rhamnose. Its pathway is carbohydrate metabolism; L-rhamnose metabolism. Involved in the anomeric conversion of L-rhamnose. The polypeptide is L-rhamnose mutarotase (Paraburkholderia phymatum (strain DSM 17167 / CIP 108236 / LMG 21445 / STM815) (Burkholderia phymatum)).